Consider the following 704-residue polypeptide: SH3KBP1-binding protein 1 (704 aa).

Ala2 carries the post-translational modification N-acetylalanine. The region spanning 19–88 (EVIHLNVGGK…LRTKELDPRG (70 aa)) is the BTB domain. The tract at residues 146 to 165 (VGPQQIGGRPAPVRRSNTMP) is disordered. Thr163 carries the phosphothreonine modification. WD repeat units lie at residues 233–280 (RLDW…GGSE), 283–322 (VFHLGVPVEALFFVGNQLIATSHTGRIGVWNAVTKHWQVQ), 324–359 (VQPITSYDAAGSFLLLGCSNGSIYYVDVQKFPLRMK), 428–466 (VHRSPVTKIMLSEKHLISVCADNNHVRTWSVTRFRGMIS), and 548–586 (LECEGSRRLGSRPRRYLLTGQANGSLAMWDLTTAMDGLG). A disordered region spans residues 609 to 704 (PLASSRGSFP…LKKTLNETSF (96 aa)). The segment covering 612–631 (SSRGSFPSPSPRTSLTSLHS) has biased composition (low complexity). The PXXXPR motif lies at 618-623 (PSPSPR). Phosphoserine is present on residues Ser644 and Ser646. The short motif at 678–683 (PTPAPR) is the PXXXPR element. At Thr693 the chain carries Phosphothreonine.

The protein belongs to the KCTD3 family. As to quaternary structure, monomer. Interacts with CUL3; interaction is direct and forms a 5:5 heterodecamer. Interacts (via PXXXPR motifs) with SH3KBP1 (via SH3 domains). Directly interacts with cathepsin B/CTSB.

It localises to the lysosome. In terms of biological role, inhibits CBL-SH3KBP1 complex mediated down-regulation of EGFR signaling by sequestration of SH3KBP1. Binds to SH3KBP1 and prevents its interaction with CBL and inhibits translocation of SH3KBP1 to EGFR containing vesicles upon EGF stimulation. This chain is SH3KBP1-binding protein 1 (Shkbp1), found in Mus musculus (Mouse).